Reading from the N-terminus, the 345-residue chain is Glycerol-3-phosphate dehydrogenase [NAD(P)+] (345 aa).

The NADPH site is built by Ser-11, Trp-12, His-32, Arg-33, and Lys-106. Sn-glycerol 3-phosphate contacts are provided by Lys-106, Gly-137, and Ser-139. Ala-141 serves as a coordination point for NADPH. 5 residues coordinate sn-glycerol 3-phosphate: Lys-192, Asp-245, Ser-255, Arg-256, and Asn-257. The active-site Proton acceptor is the Lys-192. Arg-256 serves as a coordination point for NADPH. NADPH contacts are provided by Val-280 and Glu-282.

Belongs to the NAD-dependent glycerol-3-phosphate dehydrogenase family.

Its subcellular location is the cytoplasm. The enzyme catalyses sn-glycerol 3-phosphate + NAD(+) = dihydroxyacetone phosphate + NADH + H(+). It catalyses the reaction sn-glycerol 3-phosphate + NADP(+) = dihydroxyacetone phosphate + NADPH + H(+). Its pathway is membrane lipid metabolism; glycerophospholipid metabolism. In terms of biological role, catalyzes the reduction of the glycolytic intermediate dihydroxyacetone phosphate (DHAP) to sn-glycerol 3-phosphate (G3P), the key precursor for phospholipid synthesis. This is Glycerol-3-phosphate dehydrogenase [NAD(P)+] from Bacillus velezensis (strain DSM 23117 / BGSC 10A6 / LMG 26770 / FZB42) (Bacillus amyloliquefaciens subsp. plantarum).